Reading from the N-terminus, the 217-residue chain is Orotidine 5'-phosphate decarboxylase (217 aa).

Residues Asp14, Lys36, 64–73 (DFKVADIPST), Ser120, 172–182 (PGVGAQGGNLS), Gly197, and Arg198 contribute to the substrate site. The active-site Proton donor is Lys66.

Belongs to the OMP decarboxylase family. Type 1 subfamily. In terms of assembly, homodimer.

It carries out the reaction orotidine 5'-phosphate + H(+) = UMP + CO2. It participates in pyrimidine metabolism; UMP biosynthesis via de novo pathway; UMP from orotate: step 2/2. Functionally, catalyzes the decarboxylation of orotidine 5'-monophosphate (OMP) to uridine 5'-monophosphate (UMP). The protein is Orotidine 5'-phosphate decarboxylase of Methanococcus maripaludis (strain DSM 14266 / JCM 13030 / NBRC 101832 / S2 / LL).